Reading from the N-terminus, the 591-residue chain is Aspartate--tRNA(Asp/Asn) ligase (591 aa).

Glutamate 174 is a binding site for L-aspartate. The tract at residues 198-201 (QLFK) is aspartate. Residue arginine 220 participates in L-aspartate binding. ATP is bound by residues 220–222 (RDE) and glutamine 229. Position 450 (histidine 450) interacts with L-aspartate. Glutamate 483 contributes to the ATP binding site. Arginine 490 contributes to the L-aspartate binding site. ATP is bound at residue 535 to 538 (GLDR).

It belongs to the class-II aminoacyl-tRNA synthetase family. Type 1 subfamily. In terms of assembly, homodimer.

Its subcellular location is the cytoplasm. The enzyme catalyses tRNA(Asx) + L-aspartate + ATP = L-aspartyl-tRNA(Asx) + AMP + diphosphate. Aspartyl-tRNA synthetase with relaxed tRNA specificity since it is able to aspartylate not only its cognate tRNA(Asp) but also tRNA(Asn). Reaction proceeds in two steps: L-aspartate is first activated by ATP to form Asp-AMP and then transferred to the acceptor end of tRNA(Asp/Asn). In Pseudomonas syringae pv. tomato (strain ATCC BAA-871 / DC3000), this protein is Aspartate--tRNA(Asp/Asn) ligase.